A 469-amino-acid chain; its full sequence is Pentatricopeptide repeat-containing protein At2g34370, mitochondrial (469 aa).

Residues 1-65 (MVRLVCSRIL…QNRSFVQCRR (65 aa)) constitute a mitochondrion transit peptide. PPR repeat units follow at residues 142-172 (DARS…MPKR), 173-207 (NSET…GNKP), 208-238 (DKEI…MYRD), and 244-274 (SMED…MTVE). Residues 375–469 (DIGFVPATRV…NGVCSCKDYW (95 aa)) form a type DYW motif region.

It belongs to the PPR family. PCMP-H subfamily.

It localises to the mitochondrion. The polypeptide is Pentatricopeptide repeat-containing protein At2g34370, mitochondrial (PCMP-H25) (Arabidopsis thaliana (Mouse-ear cress)).